Consider the following 385-residue polypeptide: tRNA-specific 2-thiouridylase MnmA (385 aa).

ATP-binding positions include 8 to 15 (AMSGGVDS) and leucine 34. Cysteine 102 functions as the Nucleophile in the catalytic mechanism. The cysteines at positions 102 and 200 are disulfide-linked. ATP is bound at residue glycine 126. Residues 150–152 (KDQ) form an interaction with tRNA region. Cysteine 200 (cysteine persulfide intermediate) is an active-site residue. An interaction with tRNA region spans residues 307–308 (RY).

This sequence belongs to the MnmA/TRMU family.

It is found in the cytoplasm. The catalysed reaction is S-sulfanyl-L-cysteinyl-[protein] + uridine(34) in tRNA + AH2 + ATP = 2-thiouridine(34) in tRNA + L-cysteinyl-[protein] + A + AMP + diphosphate + H(+). Its function is as follows. Catalyzes the 2-thiolation of uridine at the wobble position (U34) of tRNA, leading to the formation of s(2)U34. The protein is tRNA-specific 2-thiouridylase MnmA of Heliobacterium modesticaldum (strain ATCC 51547 / Ice1).